We begin with the raw amino-acid sequence, 339 residues long: MFYKIAQKVMFQMDPERAHNLAIGSLKMTGNSPLNAFYAQNIAPAPVSFMGLTFPNPVGLAAGMDKDGESIDAFHAMGFGHVEVGTVTPRPQPGNDLPRLFRLKPAKAIINRMGFNNKGVDNLVKNLIAKKTDIMVGVNIGKNKDTPVEQGKDDYLICMDKVYPYAAYIAVNISSPNTPGLRSLQYGDLLDELLSALKTKQLELAEKHKKYVPIALKIAPDLTTEEIENIAQSLIKNKFDGAIATNTTLTRDGVSGLANANESGGLSGKPLTELSTKVIKQLATCLNGQIPIIGVGGINSAEDALAKFDAGATMVQIYSGFIYQGPKLIKEIVEAYRLK.

Residues 62 to 66 (AGMDK) and threonine 86 contribute to the FMN site. Lysine 66 provides a ligand contact to substrate. Position 111–115 (111–115 (NRMGF)) interacts with substrate. FMN contacts are provided by asparagine 139 and asparagine 172. Substrate is bound at residue asparagine 172. Residue serine 175 is the Nucleophile of the active site. Asparagine 177 is a substrate binding site. FMN-binding residues include lysine 217 and threonine 245. 246-247 (NT) is a binding site for substrate. FMN is bound by residues glycine 268, glycine 297, and 318 to 319 (YS).

This sequence belongs to the dihydroorotate dehydrogenase family. Type 2 subfamily. As to quaternary structure, monomer. Requires FMN as cofactor.

It is found in the cell membrane. It carries out the reaction (S)-dihydroorotate + a quinone = orotate + a quinol. It functions in the pathway pyrimidine metabolism; UMP biosynthesis via de novo pathway; orotate from (S)-dihydroorotate (quinone route): step 1/1. Functionally, catalyzes the conversion of dihydroorotate to orotate with quinone as electron acceptor. The chain is Dihydroorotate dehydrogenase (quinone) from Shewanella sp. (strain MR-4).